The chain runs to 519 residues: O-fucosyltransferase 1 (519 aa).

Topologically, residues 1-24 are cytoplasmic; the sequence is MRRLGHHRLHGKTGGVGTKGMVAK. The helical; Signal-anchor for type II membrane protein transmembrane segment at 25–45 threads the bilayer; that stretch reads LSIGVIVLLICTLSLLFSANI. The Lumenal portion of the chain corresponds to 46–519; it reads GSNREPTRPS…TNSTVTGLER (474 aa). The tract at residues 67–86 is disordered; the sequence is KSGGWRPSSAPRSDWPPPTK. N-linked (GlcNAc...) asparagine glycosylation occurs at N118. Substrate is bound at residue 260 to 262; the sequence is HLR. N-linked (GlcNAc...) asparagine glycans are attached at residues N327, N357, and N511. The segment at 497–519 is disordered; the sequence is RLESIRDPDSTSQTNSTVTGLER. A compositionally biased stretch (polar residues) spans 506–519; it reads STSQTNSTVTGLER.

This sequence belongs to the glycosyltransferase GT106 family.

The protein resides in the golgi apparatus membrane. The protein operates within glycan metabolism. The protein is O-fucosyltransferase 1 of Arabidopsis thaliana (Mouse-ear cress).